Reading from the N-terminus, the 135-residue chain is Hemoglobin subunit beta-3 (135 aa).

The 134-residue stretch at 2-135 folds into the Globin domain; sequence HWTAEEKALV…VVDALSKAYQ (134 aa). Residues His-57 and His-81 each contribute to the heme b site.

It belongs to the globin family. As to quaternary structure, hb 3 is a heterotetramer of two alpha and two beta-3 chains. As to expression, red blood cells (at protein level).

In terms of biological role, involved in oxygen transport from gills to the various peripheral tissues. The polypeptide is Hemoglobin subunit beta-3 (Somniosus microcephalus (Greenland sleeper shark)).